The chain runs to 152 residues: SsrA-binding protein (152 aa).

Belongs to the SmpB family.

It is found in the cytoplasm. Its function is as follows. Required for rescue of stalled ribosomes mediated by trans-translation. Binds to transfer-messenger RNA (tmRNA), required for stable association of tmRNA with ribosomes. tmRNA and SmpB together mimic tRNA shape, replacing the anticodon stem-loop with SmpB. tmRNA is encoded by the ssrA gene; the 2 termini fold to resemble tRNA(Ala) and it encodes a 'tag peptide', a short internal open reading frame. During trans-translation Ala-aminoacylated tmRNA acts like a tRNA, entering the A-site of stalled ribosomes, displacing the stalled mRNA. The ribosome then switches to translate the ORF on the tmRNA; the nascent peptide is terminated with the 'tag peptide' encoded by the tmRNA and targeted for degradation. The ribosome is freed to recommence translation, which seems to be the essential function of trans-translation. The protein is SsrA-binding protein of Rickettsia prowazekii (strain Madrid E).